The sequence spans 515 residues: MAEQVALSRTQVCGILREELYQGDAFHQADTHIFIIMGASGDLAKKKIYPTIWWLFRDGLLPEDTFIVGYARSRLTVDDIRKQSEPFFKATPEERPKLEEFFARNSYVAGQYDDPASYKHLNSHMNALHQGMQANRLFYLALPPTVYEAVTKNIQETCMSQTGWNRIIVEKPFGRDLQSSNQLSNHISSLFREDQIYRIDHYLGKEMVQNLMVLRFANRIFGPIWNRDNIACVILTFKEPFGTEGRGGYFDEFGIIRDVMQNHLLQMLCLVAMEKPASTDSDDVRDEKVKVLKCISEVETSNVVLGQYVGNPNGEGEATNGYLDDPTVPRGSTTATFAAAVLYVENERWDGVPFILRCGKALNERKAEVRLQFRDVAGDIFHQQCKRNELVIRVQPNEAVYTKMMTKKPGMFFNPEESELDLTYGNRYKNVKLPDAYERLILDVFCGSQMHFVRSDELREAWRIFTPLLHKIDQEKPQPIPYVYGSRGPTEADELMKRVGFQYEGTYKWVNPHKL.

The residue at position 2 (Ala2) is an N-acetylalanine. Phosphoserine is present on Ser8. Thr10 is modified (phosphothreonine). NADP(+) is bound by residues 38–45 (GASGDLAK) and Arg72. At Lys89 the chain carries N6-acetyllysine. NADP(+) contacts are provided by Tyr147 and Lys171. Residues Lys171, 201–205 (HYLGK), Glu239, and Asp258 each bind D-glucose 6-phosphate. Lys171 bears the N6-(2-hydroxyisobutyryl)lysine; alternate mark. Lys171 carries the post-translational modification N6-acetyllysine; alternate. His263 functions as the Proton acceptor in the catalytic mechanism. Arg357 contributes to the NADP(+) binding site. The D-glucose 6-phosphate site is built by Lys360 and Arg365. 3 residues coordinate NADP(+): Lys366, Arg370, and Arg393. D-glucose 6-phosphate is bound at residue Gln395. NADP(+)-binding positions include 401–403 (YTK) and 421–423 (DLT). Position 403 is an N6-acetyllysine (Lys403). Lys432 is subject to N6-acetyllysine. Arg487 lines the NADP(+) pocket. Position 497 is an N6-acetyllysine (Lys497). Positions 503 and 509 each coordinate NADP(+). Tyr503 bears the Phosphotyrosine mark.

It belongs to the glucose-6-phosphate dehydrogenase family. Homotetramer; dimer of dimers. Interacts with SIRT2; the interaction is enhanced by H(2)O(2) treatment. Forms a ternary complex with ALDOB and TP53; this interaction is direct. ALDOB stabilizes the complex inhibiting G6PD activity and keeping oxidative pentose phosphate metabolism in check. In terms of processing, acetylated by ELP3 at Lys-403; acetylation inhibits its homodimerization and enzyme activity. Deacetylated by SIRT2 at Lys-403; deacetylation stimulates its enzyme activity.

Its subcellular location is the cytoplasm. It localises to the cytosol. It is found in the membrane. It carries out the reaction D-glucose 6-phosphate + NADP(+) = 6-phospho-D-glucono-1,5-lactone + NADPH + H(+). It participates in carbohydrate degradation; pentose phosphate pathway; D-ribulose 5-phosphate from D-glucose 6-phosphate (oxidative stage): step 1/3. Its function is as follows. Cytosolic glucose-6-phosphate dehydrogenase that catalyzes the first and rate-limiting step of the oxidative branch within the pentose phosphate pathway/shunt, an alternative route to glycolysis for the dissimilation of carbohydrates and a major source of reducing power and metabolic intermediates for fatty acid and nucleic acid biosynthetic processes. The chain is Glucose-6-phosphate 1-dehydrogenase (G6PD) from Cricetulus griseus (Chinese hamster).